Consider the following 121-residue polypeptide: Cell division protein FtsL (121 aa).

Residues 1-34 (MISRVTEALSKVKGSMGSHERHALPGVIGDDLLR) are Cytoplasmic-facing. A helical membrane pass occupies residues 35 to 57 (FGKLPLCLFICIILTAVTVVTTA). Over 58 to 121 (HHTRLLTAQR…PSQENIVVQK (64 aa)) the chain is Periplasmic.

It belongs to the FtsL family. Part of a complex composed of FtsB, FtsL and FtsQ.

The protein resides in the cell inner membrane. In terms of biological role, essential cell division protein. May link together the upstream cell division proteins, which are predominantly cytoplasmic, with the downstream cell division proteins, which are predominantly periplasmic. This Shigella dysenteriae serotype 1 (strain Sd197) protein is Cell division protein FtsL.